Here is a 278-residue protein sequence, read N- to C-terminus: MAKTIKVIRKKDPKKKNLSDPLAKQKLVWKIGHVLTLVFGLLFSITYFYHVLIFFKYRSWKWLFLRVNKNYSFIQSKRWYMKLLSWSPQVMYRLSLIGVFMSESVTMQQNWVGLNPTWNDLLSSENFHTLLIACLWFFGGGKSFYKILPYMILSYLHLTKMNYELNANKEEKIPLTPKDRKMLHLLAYSELLVILALTLDTILFKTGTSGFMLVIYVGIYWLRLNFSPYAQVAVLELLVKFEKYVPKKYRDKWQVIKNFIYMKMKEHEKRTEEVARYA.

At 1–34 (MAKTIKVIRKKDPKKKNLSDPLAKQKLVWKIGHV) the chain is on the cytoplasmic side. A helical transmembrane segment spans residues 35–55 (LTLVFGLLFSITYFYHVLIFF). The Extracellular portion of the chain corresponds to 56 to 129 (KYRSWKWLFL…DLLSSENFHT (74 aa)). Residues 130–150 (LLIACLWFFGGGKSFYKILPY) traverse the membrane as a helical segment. Residues 151–180 (MILSYLHLTKMNYELNANKEEKIPLTPKDR) lie on the Cytoplasmic side of the membrane. The helical transmembrane segment at 181-201 (KMLHLLAYSELLVILALTLDT) threads the bilayer. Residues 202–205 (ILFK) are Extracellular-facing. A helical membrane pass occupies residues 206-222 (TGTSGFMLVIYVGIYWL). Topologically, residues 223–278 (RLNFSPYAQVAVLELLVKFEKYVPKKYRDKWQVIKNFIYMKMKEHEKRTEEVARYA) are cytoplasmic.

It localises to the cell membrane. This is an uncharacterized protein from Saccharomyces cerevisiae (strain ATCC 204508 / S288c) (Baker's yeast).